The following is a 149-amino-acid chain: UPF0260 protein Pfl01_1392 (149 aa).

Belongs to the UPF0260 family.

The sequence is that of UPF0260 protein Pfl01_1392 from Pseudomonas fluorescens (strain Pf0-1).